Reading from the N-terminus, the 321-residue chain is Basic leucine zipper 34 (321 aa).

A disordered region spans residues 97-189 (TDDDNLHSNP…SGNRILDPKR (93 aa)). 3 stretches are compositionally biased toward low complexity: residues 110–133 (NNKNNNVGPTGSSSNTSTPSNSFN), 145–155 (NMNNNINNNYN), and 172–182 (SNNNSGDSSGN). Positions 186–238 (DPKRVKRILANRQSAQRSRVRKLQYISELERSVTSLQAEVSVLSPRVAFLDHQ) constitute a bZIP domain. The interval 188–207 (KRVKRILANRQSAQRSRVRK) is basic motif. Residues 214 to 235 (LERSVTSLQAEVSVLSPRVAFL) form a leucine-zipper region.

In terms of assembly, forms heterodimers with BZIP18, BZIP43 and VIP1/BZIP51. In terms of tissue distribution, expressed in vascular tissues of leaves, stems and siliques, anthers, filaments, tapetum, mature pollen grains, pistil vascular tissues and papillar cells, and funiculi.

The protein localises to the nucleus. Transcriptional activator involved in the sporophytic control of cell wall patterning and gametophytic control of pollen development. May play a role in the control of metabolic pathways regulating cellular transport and lipid metabolism. This is Basic leucine zipper 34 from Arabidopsis thaliana (Mouse-ear cress).